The sequence spans 254 residues: Emerin (254 aa).

Methionine 1 bears the N-acetylmethionine mark. The 45-residue stretch at 1–45 (MDNYADLSDTELTTLLRRYNIPHGPVVGSTRRLYEKKIFEYETQR) folds into the LEM domain. Residues serine 8 and serine 29 each carry the phosphoserine modification. The segment at 46–222 (RRLSPPSSSA…PGAGLGQDRQ (177 aa)) is interaction with F-actin. At serine 49 the chain carries Phosphoserine; by PKA. Residues serine 54, serine 60, serine 87, serine 98, serine 141, serine 142, and serine 143 each carry the phosphoserine modification. Tyrosine 161 carries the post-translational modification Phosphotyrosine. Residues 168–186 (RPVSASRSSLDLSYYPTSS) form an interaction with CTNNB1 region. 3 positions are modified to phosphoserine: serine 171, serine 173, and serine 175. Residues 223 to 243 (VPLWGQLLLFLVFVIVLFFIY) traverse the membrane as a helical segment.

In terms of assembly, interacts with lamins A and C, BANF1, GMCL, BCLAF1 and YTHDC1/YT521. Interacts with TMEM43; the interaction retains emerin in the nuclear inner membrane. Interacts with SUN1 and SUN2. Interacts with ACTB, SPTAN1, F-actin, CTNNB1 and beta-tubulin. Interacts with TMEM201. Interacts with NEMP1. Post-translationally, found in four different phosphorylated forms, three of which appear to be associated with the cell cycle. In terms of tissue distribution, skeletal muscle, heart, colon, testis, ovary and pancreas.

The protein localises to the nucleus inner membrane. It is found in the nucleus outer membrane. Its function is as follows. Stabilizes and promotes the formation of a nuclear actin cortical network. Stimulates actin polymerization in vitro by binding and stabilizing the pointed end of growing filaments. Inhibits beta-catenin activity by preventing its accumulation in the nucleus. Acts by influencing the nuclear accumulation of beta-catenin through a CRM1-dependent export pathway. Links centrosomes to the nuclear envelope via a microtubule association. Required for proper localization of non-farnesylated prelamin-A/C. Together with NEMP1, contributes to nuclear envelope stiffness in germ cells. EMD and BAF are cooperative cofactors of HIV-1 infection. Association of EMD with the viral DNA requires the presence of BAF and viral integrase. The association of viral DNA with chromatin requires the presence of BAF and EMD. In Homo sapiens (Human), this protein is Emerin (EMD).